A 200-amino-acid chain; its full sequence is GTP cyclohydrolase 1 (200 aa).

Zn(2+)-binding residues include Cys87, His90, and Cys158.

The protein belongs to the GTP cyclohydrolase I family. Toroid-shaped homodecamer, composed of two pentamers of five dimers.

The catalysed reaction is GTP + H2O = 7,8-dihydroneopterin 3'-triphosphate + formate + H(+). It functions in the pathway cofactor biosynthesis; 7,8-dihydroneopterin triphosphate biosynthesis; 7,8-dihydroneopterin triphosphate from GTP: step 1/1. This Xanthomonas euvesicatoria pv. vesicatoria (strain 85-10) (Xanthomonas campestris pv. vesicatoria) protein is GTP cyclohydrolase 1.